The chain runs to 492 residues: 56 kDa U1 small nuclear ribonucleoprotein component (492 aa).

The segment covering 1–15 (MRPRRRGLAYHHTKP) has biased composition (basic residues). 2 disordered regions span residues 1–35 (MRPRRRGLAYHHTKPKGQLSQGHYPTTSNDGQRRK) and 300–371 (DQFP…NKPG). The segment covering 18–30 (QLSQGHYPTTSND) has biased composition (polar residues). Residues 310-321 (SNSPSSNSISSS) are compositionally biased toward low complexity. Polar residues predominate over residues 329–353 (TSYQTQPQRHAVNKPSNVLNSSNRH).

In terms of assembly, component of the 18S U1 snRNP particle, a subcomplex of the spliceosome. Interacts with the nuclear cap-binding complex CBC1-CBC2 (yCBC). Directly contacts intronic sequences of substrate pre-RNA.

The protein resides in the nucleus. Its function is as follows. Component of the U1 snRNP particle, which recognizes and binds the 5'-splice site of pre-mRNA. Together with other non-snRNP factors, U1 snRNP forms the spliceosomal commitment complex, that targets pre-mRNA to the splicing pathway. The chain is 56 kDa U1 small nuclear ribonucleoprotein component (SNU56) from Saccharomyces cerevisiae (strain ATCC 204508 / S288c) (Baker's yeast).